We begin with the raw amino-acid sequence, 366 residues long: Photosynthetic reaction center cytochrome c subunit (366 aa).

The N-terminal stretch at 1-22 (MALAVRISTLTVAVTAAALLAG) is a signal peptide. The N-palmitoyl cysteine moiety is linked to residue C23. C23 carries the S-diacylglycerol cysteine lipid modification. M94, C107, C110, H111, M129, H143, C151, C154, H155, M238, C249, C252, H253, C309, C312, and H313 together coordinate heme.

As to quaternary structure, component of the photosynthetic reaction center composed of protein subunits L (PufL), M (PufM), H (PuhA) and cytochrome C (PufC). The reaction center interacts with light-harvesting antenna complex LH1. In terms of processing, binds 4 heme groups per subunit.

The protein resides in the cellular chromatophore membrane. Its function is as follows. The reaction center of purple bacteria contains a tightly bound cytochrome molecule which re-reduces the photo oxidized primary electron donor. The protein is Photosynthetic reaction center cytochrome c subunit (pufC) of Rubrivivax gelatinosus (strain NBRC 100245 / IL144).